The primary structure comprises 428 residues: Diaminopimelate decarboxylase (428 aa).

K64 carries the post-translational modification N6-(pyridoxal phosphate)lysine. Residues G239 and 281–284 (EPGR) contribute to the pyridoxal 5'-phosphate site. The substrate site is built by R284, R319, and Y323. C350 (proton donor) is an active-site residue. Substrate-binding residues include E351 and Y379. Y379 lines the pyridoxal 5'-phosphate pocket.

The protein belongs to the Orn/Lys/Arg decarboxylase class-II family. LysA subfamily. In terms of assembly, homodimer. It depends on pyridoxal 5'-phosphate as a cofactor.

It carries out the reaction meso-2,6-diaminopimelate + H(+) = L-lysine + CO2. It functions in the pathway amino-acid biosynthesis; L-lysine biosynthesis via DAP pathway; L-lysine from DL-2,6-diaminopimelate: step 1/1. Its function is as follows. Specifically catalyzes the decarboxylation of meso-diaminopimelate (meso-DAP) to L-lysine. The sequence is that of Diaminopimelate decarboxylase from Methanothermobacter thermautotrophicus (strain ATCC 29096 / DSM 1053 / JCM 10044 / NBRC 100330 / Delta H) (Methanobacterium thermoautotrophicum).